The sequence spans 233 residues: Protein lin-7 homolog A (233 aa).

Residues 25–80 (LDRDVARAIELLEKLQESGEVPVHKLQSLKKVLQSEFCTAIREVYQYMHETITVNG) form the L27 domain. One can recognise a PDZ domain in the interval 108 to 190 (VVELPKTDEG…SVKLVVRYTP (83 aa)).

The protein belongs to the lin-7 family. In terms of assembly, forms a complex with CASK and CASKIN1. Component of the brain-specific heterotrimeric complex (LIN-10-LIN-2-LIN-7 complex) composed of at least APBA1, CASK, and LIN7, which associates with the motor protein KIF17 to transport vesicles along microtubules. Can also interact with other modular proteins containing protein-protein interaction domains like PALS1, PALS2, MPP7, DLG1, DLG2 and DLG3 through its L27 domain. Interacts with DLG4, GRIN2B and MARCHF11 as well as CDH1 and CTNNB1, the channels KCNJ12/Kir2.2, KCNJ4/Kir2.3 and probably KCNJ2/Kir2.1 and SLC6A12/BGT-1 via its PDZ domain. The association of LIN7A with cadherin and beta-catenin is calcium-dependent, occurs at synaptic junctions and requires the actin cytoskeleton. Interacts with EGFR, ERBB2, ERBB3 and ERBB4 with both PDZ and KID domains. Associates with KIF17 via APBA1. Interacts with HTR4. Forms a tripartite complex composed of DLG1, MPP7 and LIN7 (LIN7A or LIN7C).

Its subcellular location is the cell membrane. The protein resides in the basolateral cell membrane. It localises to the cell junction. The protein localises to the postsynaptic density membrane. It is found in the tight junction. Functionally, plays a role in establishing and maintaining the asymmetric distribution of channels and receptors at the plasma membrane of polarized cells. Forms membrane-associated multiprotein complexes that may regulate delivery and recycling of proteins to the correct membrane domains. The tripartite complex composed of LIN7 (LIN7A, LIN7B or LIN7C), CASK and APBA1 associates with the motor protein KIF17 to transport vesicles containing N-methyl-D-aspartate (NMDA) receptor subunit NR2B along microtubules. This complex may have the potential to couple synaptic vesicle exocytosis to cell adhesion in brain. Ensures the proper localization of GRIN2B (subunit 2B of the NMDA receptor) to neuronal postsynaptic density and may function in localizing synaptic vesicles at synapses where it is recruited by beta-catenin and cadherin. Required to localize Kir2 channels, GABA transporter (SLC6A12) and EGFR/ERBB1, ERBB2, ERBB3 and ERBB4 to the basolateral membrane of epithelial cells. This Bos taurus (Bovine) protein is Protein lin-7 homolog A (LIN7A).